We begin with the raw amino-acid sequence, 541 residues long: Chaperonin GroEL 1 (541 aa).

ATP contacts are provided by residues 29 to 32 (TLGP), 86 to 90 (DGTTT), Gly413, 478 to 480 (NAA), and Asp494. The disordered stretch occupies residues 520–541 (VVEKPAEAEDDGHGHGHGHHHH). Residues 523-533 (KPAEAEDDGHG) show a composition bias toward basic and acidic residues.

It belongs to the chaperonin (HSP60) family. As to quaternary structure, forms a cylinder of 14 subunits composed of two heptameric rings stacked back-to-back. Interacts with the co-chaperonin GroES.

It localises to the cytoplasm. The enzyme catalyses ATP + H2O + a folded polypeptide = ADP + phosphate + an unfolded polypeptide.. Together with its co-chaperonin GroES, plays an essential role in assisting protein folding. The GroEL-GroES system forms a nano-cage that allows encapsulation of the non-native substrate proteins and provides a physical environment optimized to promote and accelerate protein folding. This Mycolicibacterium gilvum (strain PYR-GCK) (Mycobacterium gilvum (strain PYR-GCK)) protein is Chaperonin GroEL 1.